The chain runs to 335 residues: Ketol-acid reductoisomerase (NADP(+)) (335 aa).

Residues 5-185 form the KARI N-terminal Rossmann domain; sequence SKIYTDKDSN…GATRAGVIPT (181 aa). NADP(+) contacts are provided by residues 28 to 31, S56, and 86 to 89; these read YGSQ and DMVQ. The active site involves H111. G137 is a binding site for NADP(+). The 146-residue stretch at 186–331 folds into the KARI C-terminal knotted domain; it reads TFKEETETDL…NQLKDLIQKG (146 aa). D194, E198, E230, and E234 together coordinate Mg(2+). S255 contributes to the substrate binding site.

The protein belongs to the ketol-acid reductoisomerase family. Mg(2+) is required as a cofactor.

The enzyme catalyses (2R)-2,3-dihydroxy-3-methylbutanoate + NADP(+) = (2S)-2-acetolactate + NADPH + H(+). The catalysed reaction is (2R,3R)-2,3-dihydroxy-3-methylpentanoate + NADP(+) = (S)-2-ethyl-2-hydroxy-3-oxobutanoate + NADPH + H(+). The protein operates within amino-acid biosynthesis; L-isoleucine biosynthesis; L-isoleucine from 2-oxobutanoate: step 2/4. It participates in amino-acid biosynthesis; L-valine biosynthesis; L-valine from pyruvate: step 2/4. Functionally, involved in the biosynthesis of branched-chain amino acids (BCAA). Catalyzes an alkyl-migration followed by a ketol-acid reduction of (S)-2-acetolactate (S2AL) to yield (R)-2,3-dihydroxy-isovalerate. In the isomerase reaction, S2AL is rearranged via a Mg-dependent methyl migration to produce 3-hydroxy-3-methyl-2-ketobutyrate (HMKB). In the reductase reaction, this 2-ketoacid undergoes a metal-dependent reduction by NADPH to yield (R)-2,3-dihydroxy-isovalerate. This Saccharolobus islandicus (strain L.S.2.15 / Lassen #1) (Sulfolobus islandicus) protein is Ketol-acid reductoisomerase (NADP(+)).